Consider the following 294-residue polypeptide: MHNIFKGLITALITPFKDNKLDLYALERIVKHQIKHEVDAVLIAGSTGESSSLSFEEYKLLLQTSVEIVNKCIPIISGCSSNNTTYARALAAESTKIGVDGFMASPPSYVKPTQHGIYKHFEALHEACNLPIMLYSAPTRSGVDFSDETILRLSKLPRILALKDCGVDLERPLRIRATVKKDFNILTGNDEVVLAFNAQGGVGWTSVASNIVPNICKELLEKWNKNDTKGALEIHQKLLPLYTALFVESNPIPIKYAAHYLGLCENEIRPPLTEASDSAKKQIENIITSLSIKI.

Position 47 (T47) interacts with pyruvate. Y135 serves as the catalytic Proton donor/acceptor. K163 acts as the Schiff-base intermediate with substrate in catalysis. T205 is a pyruvate binding site.

Belongs to the DapA family. In terms of assembly, homotetramer; dimer of dimers.

It is found in the cytoplasm. The enzyme catalyses L-aspartate 4-semialdehyde + pyruvate = (2S,4S)-4-hydroxy-2,3,4,5-tetrahydrodipicolinate + H2O + H(+). Its pathway is amino-acid biosynthesis; L-lysine biosynthesis via DAP pathway; (S)-tetrahydrodipicolinate from L-aspartate: step 3/4. Catalyzes the condensation of (S)-aspartate-beta-semialdehyde [(S)-ASA] and pyruvate to 4-hydroxy-tetrahydrodipicolinate (HTPA). This chain is 4-hydroxy-tetrahydrodipicolinate synthase, found in Rickettsia conorii (strain ATCC VR-613 / Malish 7).